Consider the following 1097-residue polypeptide: Kinesin-like protein KIF1C (1097 aa).

The Kinesin motor domain maps to serine 5 to isoleucine 347. Glycine 96–serine 103 lines the ATP pocket. A Phosphoserine modification is found at serine 294. A coiled-coil region spans residues asparagine 358 to glycine 380. The tract at residues glycine 397–isoleucine 434 is disordered. Residues serine 404–histidine 418 show a composition bias toward pro residues. Residues glutamate 437–methionine 478 adopt a coiled-coil conformation. The residue at position 491 (serine 491) is a Phosphoserine. The 68-residue stretch at threonine 520–glycine 587 folds into the FHA domain. A coiled-coil region spans residues glutamate 630 to serine 671. 2 positions are modified to phosphoserine: serine 671 and serine 673. The stretch at alanine 824 to isoleucine 868 forms a coiled coil. Disordered stretches follow at residues glutamate 897–serine 921 and glutamine 946–valine 1097. Position 911 is a phosphoserine (serine 911). Residues glutamine 949 to leucine 958 show a composition bias toward gly residues. Over residues glycine 997–proline 1015 the composition is skewed to pro residues. The segment covering proline 1016 to arginine 1026 has biased composition (basic residues). A Phosphoserine modification is found at serine 1028. Arginine 1036 bears the Omega-N-methylarginine mark. Pro residues predominate over residues glutamine 1059–threonine 1077. At threonine 1077 the chain carries Phosphothreonine. A Phosphoserine modification is found at serine 1086. A compositionally biased stretch (basic and acidic residues) spans serine 1086–valine 1097.

It belongs to the TRAFAC class myosin-kinesin ATPase superfamily. Kinesin family. Unc-104 subfamily.

It localises to the cytoplasm. The protein localises to the cytoskeleton. Probable motor protein. In Rattus norvegicus (Rat), this protein is Kinesin-like protein KIF1C (Kif1c).